Consider the following 26-residue polypeptide: Aldehyde dehydrogenase beta chain (26 aa).

Heterotrimer composed of an alpha, a beta and a gamma chain. FAD serves as cofactor.

It carries out the reaction an aldehyde + a quinone + H2O = a quinol + a carboxylate + H(+). This is Aldehyde dehydrogenase beta chain from Amycolatopsis methanolica.